Reading from the N-terminus, the 298-residue chain is Protoheme IX farnesyltransferase (298 aa).

Transmembrane regions (helical) follow at residues 24-44 (VVSL…PAWP), 46-66 (WTTI…AAAF), 97-117 (LVFA…VVNP), 118-138 (LTMW…TVLL), 146-166 (IVIG…AATG), 172-192 (ALLL…ALAL), 231-251 (LLPV…VLLG), and 278-298 (IWYL…PIPV).

The protein belongs to the UbiA prenyltransferase family. Protoheme IX farnesyltransferase subfamily.

Its subcellular location is the cell inner membrane. The enzyme catalyses heme b + (2E,6E)-farnesyl diphosphate + H2O = Fe(II)-heme o + diphosphate. It functions in the pathway porphyrin-containing compound metabolism; heme O biosynthesis; heme O from protoheme: step 1/1. Its function is as follows. Converts heme B (protoheme IX) to heme O by substitution of the vinyl group on carbon 2 of heme B porphyrin ring with a hydroxyethyl farnesyl side group. In Thiobacillus denitrificans (strain ATCC 25259 / T1), this protein is Protoheme IX farnesyltransferase.